A 247-amino-acid polypeptide reads, in one-letter code: 2,3-bisphosphoglycerate-dependent phosphoglycerate mutase (247 aa).

Substrate contacts are provided by residues 8–15, 21–22, Arg-60, 87–90, Lys-98, 114–115, and 183–184; these read RHGESQWN, TG, ERHY, RR, and GN. The active-site Tele-phosphohistidine intermediate is His-9. Glu-87 (proton donor/acceptor) is an active-site residue.

This sequence belongs to the phosphoglycerate mutase family. BPG-dependent PGAM subfamily.

The enzyme catalyses (2R)-2-phosphoglycerate = (2R)-3-phosphoglycerate. It functions in the pathway carbohydrate degradation; glycolysis; pyruvate from D-glyceraldehyde 3-phosphate: step 3/5. In terms of biological role, catalyzes the interconversion of 2-phosphoglycerate and 3-phosphoglycerate. The polypeptide is 2,3-bisphosphoglycerate-dependent phosphoglycerate mutase (Chlorobaculum tepidum (strain ATCC 49652 / DSM 12025 / NBRC 103806 / TLS) (Chlorobium tepidum)).